A 218-amino-acid polypeptide reads, in one-letter code: Ras-related protein RABA1i (218 aa).

A GTP-binding site is contributed by 20 to 27; it reads GDSGVGKS. The short motif at 42–50 is the Effector region element; it reads SRATIGVEF. Residues 68 to 72, 126 to 129, and 156 to 157 each bind GTP; these read DTAGQ, NKAD, and SA. 2 S-geranylgeranyl cysteine lipidation sites follow: C215 and C216.

Belongs to the small GTPase superfamily. Rab family.

It localises to the cell membrane. In terms of biological role, intracellular vesicle trafficking and protein transport. This is Ras-related protein RABA1i (RABA1I) from Arabidopsis thaliana (Mouse-ear cress).